The sequence spans 367 residues: Voltage-gated potassium channel subunit beta-2 (367 aa).

Phosphoserine is present on residues S9, S14, and S20. R28 bears the Asymmetric dimethylarginine; alternate mark. An Omega-N-methylarginine; alternate modification is found at R28. Residue S31 is modified to Phosphoserine. Residues T56, W57, Q63, and D85 each contribute to the NADP(+) site. The active-site Proton donor/acceptor is the Y90. Phosphoserine is present on S112. N6-acetyllysine is present on K124. NADP(+)-binding residues include N158, S188, R189, Q214, W243, S244, P245, L246, A247, C248, K254, Y262, R264, G323, S325, Q329, E332, and N333.

The protein belongs to the shaker potassium channel beta subunit family. In terms of assembly, homotetramer. Interaction with tetrameric potassium channel alpha subunits gives rise to a heterooctamer. Identified in potassium channel complexes containing KCNA1, KCNA2, KCNA4, KCNA5, KCNA6, KCNAB1, KCNAB2 and KCND3. Interacts (in unphosphorylated form) with MAPRE1. Forms a ternary complex with SQSTM1 and PRKCZ. Post-translationally, phosphorylated by PRKCZ; may be regulated by incorporation in a complex composed of PRKCZ and SQSTM1. Detected in the juxtaparanodal region of nodes of Ranvier in myelinated nerve fibers in the spinal cord (at protein level).

The protein resides in the cytoplasm. Its subcellular location is the membrane. It localises to the cell membrane. It is found in the cell projection. The protein localises to the axon. The protein resides in the synapse. Its subcellular location is the synaptosome. It localises to the cytoskeleton. The catalysed reaction is hydroxyacetone + NADP(+) = methylglyoxal + NADPH + H(+). The enzyme catalyses (E)-4-oxonon-2-en-1-ol + NADP(+) = (E)-4-oxonon-2-enal + NADPH + H(+). Functionally, regulatory subunit of the voltage-gated potassium (Kv) Shaker channels composed of pore-forming and potassium-conducting alpha subunits and of regulatory beta subunits. The beta-2/KCNAB2 cytoplasmic subunit promotes potassium channel closure via a mechanism that does not involve physical obstruction of the channel pore. Promotes the inactivation of Kv1.4/KCNA4 and Kv1.5/KCNA5 alpha subunit-containing channels. Displays nicotinamide adenine dinucleotide phosphate (NADPH)-dependent aldoketoreductase activity by catalyzing the NADPH-dependent reduction of a wide range of aldehyde and ketone substrates. Substrate specificity includes methylglyoxal, 9,10-phenanthrenequinone, prostaglandin J2, 4-nitrobenzaldehyde, 4-nitroacetophenone and 4-oxo-trans-2-nonenal (in vitro, no physiological substrate identified yet). The binding of oxidized and reduced nucleotide alters Kv channel gating and may contribute to dynamic fine tuning of cell excitability. Contributes to the regulation of nerve signaling, and prevents neuronal hyperexcitability. The polypeptide is Voltage-gated potassium channel subunit beta-2 (KCNAB2) (Bos taurus (Bovine)).